We begin with the raw amino-acid sequence, 309 residues long: MSNAPFPIDPELTAIAIAYRNGRMIADEVLPRVPVGKQEFKYWKYDLAQGFTVPETLVGRKSKPNEVEFSATDETSSTEDHGLDAPVPQADIDNAPTNYNPLGHATEQTTNLILLDREARTSKLVFNPNSYAAGNKRTLSGTDQWSDPASNPLPEITDALDSVILRPNIGVLGRRTATILRRHPKIVKAYNGTLGDEGMVPMAFLQELLELEAIYVGEARLNIARPGQNPSLIRAWGPHASFIYRDRLADTRNGTTFGLTGQWGDRVSGSIADPNIGLRGGQRVRVGESVKELVTAPDLGFFFENAVAA.

A disordered region spans residues 64-83; it reads PNEVEFSATDETSSTEDHGL.

In terms of assembly, multimerizes.

The protein resides in the virion. In terms of biological role, probably the major capsid protein. The chain is Major capsid protein from Pseudomonas phage JBD67.